The sequence spans 437 residues: Methylenetetrahydrofolate--tRNA-(uracil-5-)-methyltransferase TrmFO (437 aa).

FAD is bound at residue 10–15 (GAGLAG).

This sequence belongs to the MnmG family. TrmFO subfamily. Requires FAD as cofactor.

It localises to the cytoplasm. It carries out the reaction uridine(54) in tRNA + (6R)-5,10-methylene-5,6,7,8-tetrahydrofolate + NADH + H(+) = 5-methyluridine(54) in tRNA + (6S)-5,6,7,8-tetrahydrofolate + NAD(+). The catalysed reaction is uridine(54) in tRNA + (6R)-5,10-methylene-5,6,7,8-tetrahydrofolate + NADPH + H(+) = 5-methyluridine(54) in tRNA + (6S)-5,6,7,8-tetrahydrofolate + NADP(+). Functionally, catalyzes the folate-dependent formation of 5-methyl-uridine at position 54 (M-5-U54) in all tRNAs. The protein is Methylenetetrahydrofolate--tRNA-(uracil-5-)-methyltransferase TrmFO of Pelotomaculum thermopropionicum (strain DSM 13744 / JCM 10971 / SI).